The chain runs to 228 residues: Lipoprotein-releasing system ATP-binding protein LolD (228 aa).

One can recognise an ABC transporter domain in the interval 8–228 (LQAKKLVKAY…ELHDGLLRRL (221 aa)). 44–51 (GASGSGKS) provides a ligand contact to ATP.

This sequence belongs to the ABC transporter superfamily. Lipoprotein translocase (TC 3.A.1.125) family. The complex is composed of two ATP-binding proteins (LolD) and two transmembrane proteins (LolC and LolE).

It localises to the cell inner membrane. Functionally, part of the ABC transporter complex LolCDE involved in the translocation of mature outer membrane-directed lipoproteins, from the inner membrane to the periplasmic chaperone, LolA. Responsible for the formation of the LolA-lipoprotein complex in an ATP-dependent manner. In Alcanivorax borkumensis (strain ATCC 700651 / DSM 11573 / NCIMB 13689 / SK2), this protein is Lipoprotein-releasing system ATP-binding protein LolD.